Consider the following 102-residue polypeptide: Large ribosomal subunit protein bL21 (102 aa).

The protein belongs to the bacterial ribosomal protein bL21 family. As to quaternary structure, part of the 50S ribosomal subunit. Contacts protein L20.

Functionally, this protein binds to 23S rRNA in the presence of protein L20. The sequence is that of Large ribosomal subunit protein bL21 from Neisseria meningitidis serogroup A / serotype 4A (strain DSM 15465 / Z2491).